We begin with the raw amino-acid sequence, 203 residues long: Holliday junction branch migration complex subunit RuvA (203 aa).

The segment at 1-64 (MIGRLRGIII…EDAQLLYGFN (64 aa)) is domain I. Residues 65–142 (NKQERTLFKE…KGLHGDLFTP (78 aa)) are domain II. A flexible linker region spans residues 143 to 154 (AADLVLTSPASP). The segment at 155–203 (ATDDAEQEAVAALVALGYKPQEASRMVSKIARPDTSSETLIREALRAAL) is domain III.

The protein belongs to the RuvA family. Homotetramer. Forms an RuvA(8)-RuvB(12)-Holliday junction (HJ) complex. HJ DNA is sandwiched between 2 RuvA tetramers; dsDNA enters through RuvA and exits via RuvB. An RuvB hexamer assembles on each DNA strand where it exits the tetramer. Each RuvB hexamer is contacted by two RuvA subunits (via domain III) on 2 adjacent RuvB subunits; this complex drives branch migration. In the full resolvosome a probable DNA-RuvA(4)-RuvB(12)-RuvC(2) complex forms which resolves the HJ.

The protein resides in the cytoplasm. The RuvA-RuvB-RuvC complex processes Holliday junction (HJ) DNA during genetic recombination and DNA repair, while the RuvA-RuvB complex plays an important role in the rescue of blocked DNA replication forks via replication fork reversal (RFR). RuvA specifically binds to HJ cruciform DNA, conferring on it an open structure. The RuvB hexamer acts as an ATP-dependent pump, pulling dsDNA into and through the RuvAB complex. HJ branch migration allows RuvC to scan DNA until it finds its consensus sequence, where it cleaves and resolves the cruciform DNA. This Shigella flexneri serotype 5b (strain 8401) protein is Holliday junction branch migration complex subunit RuvA.